Consider the following 447-residue polypeptide: MRRFFGTDGIRGVVNEDLTPELAYKLSRAIVGYFGNVKGKKVIIGSDTRNSKDMLKSALVAGFTSGGMNVLDVGVISTPALSYLVKNQDEVLLGVMISASHNPVEYNGIKIFKNDGFKLDDDVEAEIENYLLKEDNYYRANPREIGVIYDFSHIKEKYKNYLREIINGNFEGYKVMLDCAFGSLSEIAPEVFRELGAEVVAYNTKYNGLNINENCGAVYPETSKKLFLNSGAHIGFTYDGDGDRVIAFSENGEIIDGDIMLGILAKYLKEKGLLKGDKIVGTIMTNLGLEEYLKNINVELIRTKVGDRYVLDEILKYGLNLGGETSGHIILFDYMSTGDGLLTSLFLLKILKEKGVKLSELAKDIKIFPQVHEKVSVKGLNITEDMEKRFIEITEEVINGKNIRYIVRKSGTEPVVRITLEGDVPKEYLNELVLEIKSRIIDLLSNF.

The active-site Phosphoserine intermediate is the Ser-100. Mg(2+) is bound by residues Ser-100, Asp-239, Asp-241, and Asp-243. Ser-100 is modified (phosphoserine).

This sequence belongs to the phosphohexose mutase family. It depends on Mg(2+) as a cofactor. In terms of processing, activated by phosphorylation.

The catalysed reaction is alpha-D-glucosamine 1-phosphate = D-glucosamine 6-phosphate. Functionally, catalyzes the conversion of glucosamine-6-phosphate to glucosamine-1-phosphate. This Dictyoglomus turgidum (strain DSM 6724 / Z-1310) protein is Phosphoglucosamine mutase.